Here is a 25-residue protein sequence, read N- to C-terminus: Antithrombin-III (25 aa).

This sequence belongs to the serpin family. As to quaternary structure, forms protease inhibiting heterodimer with TMPRSS7. Post-translationally, phosphorylated by FAM20C in the extracellular medium. In terms of tissue distribution, plasma.

The protein resides in the secreted. It is found in the extracellular space. Its function is as follows. Most important serine protease inhibitor in plasma that regulates the blood coagulation cascade. AT-III inhibits thrombin, matriptase-3/TMPRSS7, as well as factors IXa, Xa and XIa. Its inhibitory activity is greatly enhanced in the presence of heparin. The chain is Antithrombin-III (SERPINC1) from Mesocricetus auratus (Golden hamster).